The following is a 169-amino-acid chain: Podoplanin (169 aa).

A signal peptide spans 1 to 22; it reads MWRVPVLLLVLGGAGLRVPAAG. Residues 23-138 lie on the Extracellular side of the membrane; it reads ASTVRPDDII…EKDGLATVTL (116 aa). Thr-25 is a glycosylation site (O-linked (GalNAc...) threonine). The tract at residues 37-69 is disordered; the sequence is DSVVTPGTEDSVVTPGAEDNVVTDGATEEPYES. Ser-38 carries O-linked (GalNAc...) serine glycosylation. Thr-41 and Thr-44 each carry an O-linked (GalNAc...) threonine glycan. O-linked (GalNAc...) serine glycosylation is present at Ser-47. Thr-50, Thr-59, Thr-63, Thr-72, Thr-76, Thr-79, Thr-83, Thr-92, Thr-96, Thr-106, Thr-107, Thr-108, Thr-113, Thr-126, and Thr-127 each carry an O-linked (GalNAc...) threonine glycan. Residues 139 to 159 traverse the membrane as a helical segment; that stretch reads VGIIVGVLLAIGFIGGIIIVV. Residues 140–144 are requires for dimerization and lipid rafts association; sequence GIIVG. At 160-169 the chain is on the cytoplasmic side; that stretch reads ARKMSGRYSP. Positions 161–162 are requires for interaction with MSN and EZR; the sequence is RK.

The protein belongs to the podoplanin family. As to quaternary structure, homodimer. Interacts with CLEC1B; the interaction is independent of CLEC1B glycosylation and activates CLEC1B; the interaction is dependent of sialic acid on O-glycans. Interacts with CD9; this interaction is homophilic and attenuates platelet aggregation and pulmonary metastasis induced by PDPN. Interacts with LGALS8; the interaction is glycosylation-dependent; may participate in connection of the lymphatic endothelium to the surrounding extracellular matrix. Interacts with HSPA9. Interacts (via extracellular domain) with CD44; this interaction is required for PDPN-mediated directional migration and regulation of lamellipodia extension/stabilization during cell spreading and migration. Interacts (via cytoplasmic domain) with MSN and EZR; activates RHOA and promotes epithelial-mesenchymal transition. Interacts with CCL21; relocalized PDPN to the basolateral membrane. Extensively O-glycosylated. Contains sialic acid residues. O-glycosylation is necessary for platelet aggregation activity. Disialylated at Thr-59; sialic acid is critical for platelet-aggregating activity and for CLEC1B interaction. In terms of processing, the N-terminus is blocked.

It localises to the membrane. The protein localises to the cell projection. It is found in the filopodium membrane. The protein resides in the lamellipodium membrane. Its subcellular location is the microvillus membrane. It localises to the ruffle membrane. The protein localises to the membrane raft. It is found in the apical cell membrane. The protein resides in the basolateral cell membrane. Its subcellular location is the invadopodium. Mediates effects on cell migration and adhesion through its different partners. During development plays a role in blood and lymphatic vessels separation by binding CLEC1B, triggering CLEC1B activation in platelets and leading to platelet activation and/or aggregation. Interaction with CD9, on the contrary, attenuates platelet aggregation and pulmonary metastasis induced by PDPN. Mediates effects on cell migration and adhesion through its different partners. Through MSN or EZR interaction promotes epithelial-mesenchymal transition (EMT) leading to ERZ phosphorylation and triggering RHOA activation leading to cell migration increase and invasiveness. Interaction with CD44 promotes directional cell migration in epithelial and tumor cells. In lymph nodes (LNs), controls fibroblastic reticular cells (FRCs) adhesion to the extracellular matrix (ECM) and contraction of the actomyosin by maintaining ERM proteins (EZR; MSN and RDX) and MYL9 activation through association with unknown transmembrane proteins. Engagement of CLEC1B by PDPN promotes FRCs relaxation by blocking lateral membrane interactions leading to reduction of ERM proteins (EZR; MSN and RDX) and MYL9 activation. Through binding with LGALS8 may participate in connection of the lymphatic endothelium to the surrounding extracellular matrix. In keratinocytes, induces changes in cell morphology showing an elongated shape, numerous membrane protrusions, major reorganization of the actin cytoskeleton, increased motility and decreased cell adhesion. Controls invadopodia stability and maturation leading to efficient degradation of the extracellular matrix (ECM) in tumor cells through modulation of RHOC activity in order to activate ROCK1/ROCK2 and LIMK1/LIMK2 and inactivation of CFL1. Required for normal lung cell proliferation and alveolus formation at birth. Does not function as a water channel or as a regulator of aquaporin-type water channels. Does not have any effect on folic acid or amino acid transport. In Canis lupus familiaris (Dog), this protein is Podoplanin (PDPN).